The primary structure comprises 144 residues: Endoribonuclease YbeY (144 aa).

Residues His105, His109, and Asp115 each contribute to the Zn(2+) site.

The protein belongs to the endoribonuclease YbeY family. The cofactor is Zn(2+).

It is found in the cytoplasm. In terms of biological role, single strand-specific metallo-endoribonuclease involved in late-stage 70S ribosome quality control and in maturation of the 3' terminus of the 16S rRNA. This chain is Endoribonuclease YbeY, found in Chlorobium limicola (strain DSM 245 / NBRC 103803 / 6330).